The primary structure comprises 169 residues: MLAEPINLQSWISENKDLLQPPVNNYCLHRGGATVMIVGGPNERTDYHVNQTPEYFHQIKGDMTLKVVDDGKFRDITIREGDSFLLPGNVPHNPVRYADTIGLVVEQDRPKGVNDKIRWYCSNCREIVHQVEFYCYDLGTQVKDAILAFDGDDEARTCKCGTYNYSRPN.

O2 is bound at residue R44. Positions 48, 54, and 92 each coordinate Fe cation. E54 serves as a coordination point for substrate. Residues R96 and E106 each contribute to the substrate site. A divalent metal cation contacts are provided by C121, C124, C158, and C160.

Belongs to the 3-HAO family. Fe(2+) is required as a cofactor.

The protein resides in the cytoplasm. The enzyme catalyses 3-hydroxyanthranilate + O2 = (2Z,4Z)-2-amino-3-carboxymuconate 6-semialdehyde. The protein operates within cofactor biosynthesis; NAD(+) biosynthesis; quinolinate from L-kynurenine: step 3/3. Functionally, catalyzes the oxidative ring opening of 3-hydroxyanthranilate to 2-amino-3-carboxymuconate semialdehyde, which spontaneously cyclizes to quinolinate. In Meyerozyma guilliermondii (strain ATCC 6260 / CBS 566 / DSM 6381 / JCM 1539 / NBRC 10279 / NRRL Y-324) (Yeast), this protein is 3-hydroxyanthranilate 3,4-dioxygenase.